The chain runs to 358 residues: Histidinol-phosphate aminotransferase (358 aa).

Residue lysine 211 is modified to N6-(pyridoxal phosphate)lysine.

It belongs to the class-II pyridoxal-phosphate-dependent aminotransferase family. Histidinol-phosphate aminotransferase subfamily. As to quaternary structure, homodimer. The cofactor is pyridoxal 5'-phosphate.

It carries out the reaction L-histidinol phosphate + 2-oxoglutarate = 3-(imidazol-4-yl)-2-oxopropyl phosphate + L-glutamate. It functions in the pathway amino-acid biosynthesis; L-histidine biosynthesis; L-histidine from 5-phospho-alpha-D-ribose 1-diphosphate: step 7/9. In Blochmanniella pennsylvanica (strain BPEN), this protein is Histidinol-phosphate aminotransferase.